The primary structure comprises 761 residues: Complement factor B (761 aa).

The N-terminal stretch at 1 to 22 (MESPQLCLVLLVLGFSSGGVSA) is a signal peptide. 3 consecutive Sushi domains span residues 32-97 (VSCS…ECRA), 98-157 (IRCP…ICDD), and 160-217 (GYCP…SCQD). Cystine bridges form between C34-C73, C59-C95, C100-C142, C128-C155, C162-C202, and C188-C215. N119 and N139 each carry an N-linked (GlcNAc...) asparagine glycan. A VWFA domain is found at 267-466 (NIYLVLDGSD…DLENVFYQMI (200 aa)). Positions 275 and 277 each coordinate Mg(2+). N-linked (GlcNAc...) asparagine glycosylation is present at N282. A Mg(2+)-binding site is contributed by T350. N375 carries N-linked (GlcNAc...) asparagine glycosylation. The region spanning 474-754 (LCGMVWEHKK…VLPWLKDKLK (281 aa)) is the Peptidase S1 domain. 5 cysteine pairs are disulfide-bonded: C475-C593, C508-C524, C596-C612, C653-C679, and C692-C722. Active-site charge relay system residues include H523 and D573. Residue S696 is the Charge relay system of the active site.

This sequence belongs to the peptidase S1 family. In terms of assembly, monomer. Interacts with complement C3b; this interaction is dependent on the presence of Mg(2+). As to quaternary structure, catalytic component of the C3 convertase of the alternative complement pathway, also named C3bBb, composed of complement factor B Bb and complement C3b. Catalytic component of the C5 convertase of the alternative complement pathway, also named C3bBb3b, composed of complement factor B Bb and additional molecules of complement C3b. Interacts to CFP; this interaction contributes to the stabilization of the active C3-convertase enzyme complex. Mg(2+) is required as a cofactor. Requires Mn(2+) as cofactor. In terms of processing, cleaved by CFD following activation of the alternative complement system, generating Ba and Bb chains. Cleavage and activation takes place when CFB is already associated with complement C3b.

Its subcellular location is the secreted. The protein resides in the cell surface. The enzyme catalyses Cleavage of Arg-|-Ser bond in complement component C3 alpha-chain to yield C3a and C3b, and Arg-|-Xaa bond in complement component C5 alpha-chain to yield C5a and C5b.. Precursor of the catalytic component of the C3 and C5 convertase complexes of the alternative pathway of the complement system, a cascade of proteins that leads to phagocytosis and breakdown of pathogens and signaling that strengthens the adaptive immune system. The alternative complement pathway acts as an amplification loop that enhances other complement pathways (classical, lectin and GZMK) by promoting formation of additional C3 and C5 convertases. CFB is cleaved and activated by CFD to generate Ba and Bb chains; Bb chain constituting the catalytic component of the C3 and C5 convertases. Its function is as follows. Serine protease component of the complement C3 and C5 convertase complexes of the alternative complement pathway. Following cleavage and activation by factor D (CFD), forms the C3 convertase together with complement C3b. As part of the C3 convertase, cleaves and activates C3 into C3a anaphylatoxin and C3b opsonin, the next components of the complement pathways. When an additional complement C3b molecule binds to the C3 convertase, forms the C5 convertase, which cleaves and activates C5 into C5a anaphylatoxin and C5b component of the membrane attack complex. Functionally, involved in proliferation and differentiation of preactivated B-lymphocytes, rapid spreading of peripheral blood monocytes, stimulation of lymphocyte blastogenesis and lysis of erythrocytes. This Mus musculus (Mouse) protein is Complement factor B (Cfb).